The primary structure comprises 495 residues: Surface E' protein (495 aa).

A helical transmembrane segment spans residues 224–235 (GTLIGLVALIGV).

Its subcellular location is the cell membrane. The chain is Surface E' protein (cbbE') from Coxiella burnetii.